Consider the following 100-residue polypeptide: Replication restart protein PriB (100 aa).

In terms of domain architecture, SSB spans 1 to 99 (MGFNNLVSLA…LRIQNIKEYK (99 aa)).

It belongs to the PriB family. As to quaternary structure, homodimer. Interacts with PriA and DnaT. Component of the replication restart primosome. Primosome assembly occurs via a 'hand-off' mechanism. PriA binds to replication forks, subsequently PriB then DnaT bind; DnaT then displaces ssDNA to generate the helicase loading substrate.

Functionally, involved in the restart of stalled replication forks, which reloads the replicative helicase on sites other than the origin of replication; the PriA-PriB pathway is the major replication restart pathway. During primosome assembly it facilitates complex formation between PriA and DnaT on DNA; stabilizes PriA on DNA. Stimulates the DNA unwinding activity of PriA helicase. In Neisseria meningitidis serogroup C (strain 053442), this protein is Replication restart protein PriB.